We begin with the raw amino-acid sequence, 247 residues long: Carboxy-S-adenosyl-L-methionine synthase (247 aa).

S-adenosyl-L-methionine-binding positions include Y39, 64–66, 89–90, 117–118, N132, and R199; these read GCS, DN, and DI.

This sequence belongs to the class I-like SAM-binding methyltransferase superfamily. Cx-SAM synthase family. In terms of assembly, homodimer.

It carries out the reaction prephenate + S-adenosyl-L-methionine = carboxy-S-adenosyl-L-methionine + 3-phenylpyruvate + H2O. Catalyzes the conversion of S-adenosyl-L-methionine (SAM) to carboxy-S-adenosyl-L-methionine (Cx-SAM). The sequence is that of Carboxy-S-adenosyl-L-methionine synthase from Escherichia fergusonii (strain ATCC 35469 / DSM 13698 / CCUG 18766 / IAM 14443 / JCM 21226 / LMG 7866 / NBRC 102419 / NCTC 12128 / CDC 0568-73).